The primary structure comprises 239 residues: 2,3,4,5-tetrahydropyridine-2,6-dicarboxylate N-acetyltransferase (239 aa).

It belongs to the transferase hexapeptide repeat family. DapH subfamily.

The enzyme catalyses (S)-2,3,4,5-tetrahydrodipicolinate + acetyl-CoA + H2O = L-2-acetamido-6-oxoheptanedioate + CoA. Its pathway is amino-acid biosynthesis; L-lysine biosynthesis via DAP pathway; LL-2,6-diaminopimelate from (S)-tetrahydrodipicolinate (acetylase route): step 1/3. In terms of biological role, catalyzes the transfer of an acetyl group from acetyl-CoA to tetrahydrodipicolinate. In Staphylococcus aureus (strain MRSA252), this protein is 2,3,4,5-tetrahydropyridine-2,6-dicarboxylate N-acetyltransferase.